A 185-amino-acid chain; its full sequence is Small ribosomal subunit protein uS4 (185 aa).

The S4 RNA-binding domain maps to R108–H170.

This sequence belongs to the universal ribosomal protein uS4 family. Part of the 30S ribosomal subunit. Contacts protein S5. The interaction surface between S4 and S5 is involved in control of translational fidelity.

One of the primary rRNA binding proteins, it binds directly to 16S rRNA where it nucleates assembly of the body of the 30S subunit. In terms of biological role, with S5 and S12 plays an important role in translational accuracy. The sequence is that of Small ribosomal subunit protein uS4 from Methanoregula boonei (strain DSM 21154 / JCM 14090 / 6A8).